The sequence spans 424 residues: Serine hydroxymethyltransferase (424 aa).

Residues leucine 123 and 127-129 (GHL) each bind (6S)-5,6,7,8-tetrahydrofolate. Lysine 232 is subject to N6-(pyridoxal phosphate)lysine. Glutamate 245 contacts (6S)-5,6,7,8-tetrahydrofolate.

The protein belongs to the SHMT family. Homodimer. Pyridoxal 5'-phosphate is required as a cofactor.

It is found in the cytoplasm. The enzyme catalyses (6R)-5,10-methylene-5,6,7,8-tetrahydrofolate + glycine + H2O = (6S)-5,6,7,8-tetrahydrofolate + L-serine. It functions in the pathway one-carbon metabolism; tetrahydrofolate interconversion. It participates in amino-acid biosynthesis; glycine biosynthesis; glycine from L-serine: step 1/1. In terms of biological role, catalyzes the reversible interconversion of serine and glycine with tetrahydrofolate (THF) serving as the one-carbon carrier. This reaction serves as the major source of one-carbon groups required for the biosynthesis of purines, thymidylate, methionine, and other important biomolecules. Also exhibits THF-independent aldolase activity toward beta-hydroxyamino acids, producing glycine and aldehydes, via a retro-aldol mechanism. This chain is Serine hydroxymethyltransferase, found in Kocuria rhizophila (strain ATCC 9341 / DSM 348 / NBRC 103217 / DC2201).